Here is a 506-residue protein sequence, read N- to C-terminus: ATP synthase subunit alpha (506 aa).

172-179 (GDRKTGKT) serves as a coordination point for ATP.

This sequence belongs to the ATPase alpha/beta chains family. In terms of assembly, F-type ATPases have 2 components, CF(1) - the catalytic core - and CF(0) - the membrane proton channel. CF(1) has five subunits: alpha(3), beta(3), gamma(1), delta(1), epsilon(1). CF(0) has three main subunits: a(1), b(2) and c(9-12). The alpha and beta chains form an alternating ring which encloses part of the gamma chain. CF(1) is attached to CF(0) by a central stalk formed by the gamma and epsilon chains, while a peripheral stalk is formed by the delta and b chains.

It localises to the cell membrane. It catalyses the reaction ATP + H2O + 4 H(+)(in) = ADP + phosphate + 5 H(+)(out). In terms of biological role, produces ATP from ADP in the presence of a proton gradient across the membrane. The alpha chain is a regulatory subunit. The protein is ATP synthase subunit alpha of Lactobacillus gasseri (strain ATCC 33323 / DSM 20243 / BCRC 14619 / CIP 102991 / JCM 1131 / KCTC 3163 / NCIMB 11718 / NCTC 13722 / AM63).